A 183-amino-acid polypeptide reads, in one-letter code: Ribosome maturation factor RimM (183 aa).

One can recognise a PRC barrel domain in the interval 105–181 (ANEYHLMDLI…RIEIDPPLGL (77 aa)).

The protein belongs to the RimM family. As to quaternary structure, binds ribosomal protein uS19.

The protein resides in the cytoplasm. In terms of biological role, an accessory protein needed during the final step in the assembly of 30S ribosomal subunit, possibly for assembly of the head region. Essential for efficient processing of 16S rRNA. May be needed both before and after RbfA during the maturation of 16S rRNA. It has affinity for free ribosomal 30S subunits but not for 70S ribosomes. This Thermosynechococcus vestitus (strain NIES-2133 / IAM M-273 / BP-1) protein is Ribosome maturation factor RimM.